The sequence spans 555 residues: Xylulose kinase (555 aa).

Substrate contacts are provided by histidine 88, arginine 158, aspartate 274, and asparagine 275. Residues tryptophan 357, 455–456 (GA), and asparagine 459 each bind ATP.

Belongs to the FGGY kinase family.

Its subcellular location is the cytoplasm. It carries out the reaction D-xylulose + ATP = D-xylulose 5-phosphate + ADP + H(+). This is Xylulose kinase from Schizosaccharomyces pombe (strain 972 / ATCC 24843) (Fission yeast).